The following is a 367-amino-acid chain: Voltage-gated potassium channel subunit beta-2 (367 aa).

Residues Ser9, Ser14, and Ser20 each carry the phosphoserine modification. Arg28 carries the asymmetric dimethylarginine; alternate modification. At Arg28 the chain carries Omega-N-methylarginine; alternate. The residue at position 31 (Ser31) is a Phosphoserine. NADP(+)-binding residues include Thr56, Trp57, Gln63, and Asp85. The Proton donor/acceptor role is filled by Tyr90. The residue at position 112 (Ser112) is a Phosphoserine. Residue Lys124 is modified to N6-acetyllysine. Residues Asn158, Ser188, Arg189, Gln214, Trp243, Ser244, Pro245, Leu246, Ala247, Cys248, Lys254, Tyr262, Arg264, Gly323, Ser325, Gln329, Glu332, and Asn333 each coordinate NADP(+).

This sequence belongs to the shaker potassium channel beta subunit family. In terms of assembly, homotetramer. Interaction with tetrameric potassium channel alpha subunits gives rise to a heterooctamer. Identified in potassium channel complexes containing KCNA1, KCNA2, KCNA4, KCNA5, KCNA6, KCNAB1, KCNAB2 and KCND3. Interacts (in unphosphorylated form) with MAPRE1. Forms a ternary complex with SQSTM1 and PRKCZ. Phosphorylated by PRKCZ; may be regulated by incorporation in a complex composed of PRKCZ and SQSTM1. As to expression, detected in the juxtaparanodal region of nodes of Ranvier in myelinated nerve fibers in the spinal cord (at protein level).

The protein localises to the cytoplasm. It is found in the membrane. It localises to the cell membrane. Its subcellular location is the cell projection. The protein resides in the axon. The protein localises to the synapse. It is found in the synaptosome. It localises to the cytoskeleton. It carries out the reaction hydroxyacetone + NADP(+) = methylglyoxal + NADPH + H(+). The catalysed reaction is (E)-4-oxonon-2-en-1-ol + NADP(+) = (E)-4-oxonon-2-enal + NADPH + H(+). Regulatory subunit of the voltage-gated potassium (Kv) Shaker channels composed of pore-forming and potassium-conducting alpha subunits and of regulatory beta subunits. The beta-2/KCNAB2 cytoplasmic subunit promotes potassium channel closure via a mechanism that does not involve physical obstruction of the channel pore. Promotes the inactivation of Kv1.4/KCNA4 and Kv1.5/KCNA5 alpha subunit-containing channels. Displays nicotinamide adenine dinucleotide phosphate (NADPH)-dependent aldoketoreductase activity by catalyzing the NADPH-dependent reduction of a wide range of aldehyde and ketone substrates. Substrate specificity includes methylglyoxal, 9,10-phenanthrenequinone, prostaglandin J2, 4-nitrobenzaldehyde, 4-nitroacetophenone and 4-oxo-trans-2-nonenal (in vitro, no physiological substrate identified yet). The binding of oxidized and reduced nucleotide alters Kv channel gating and may contribute to dynamic fine tuning of cell excitability. Contributes to the regulation of nerve signaling, and prevents neuronal hyperexcitability. The chain is Voltage-gated potassium channel subunit beta-2 (KCNAB2) from Bos taurus (Bovine).